The primary structure comprises 344 residues: Phosphoribosylformylglycinamidine cyclo-ligase (344 aa).

It belongs to the AIR synthase family.

It localises to the cytoplasm. The catalysed reaction is 2-formamido-N(1)-(5-O-phospho-beta-D-ribosyl)acetamidine + ATP = 5-amino-1-(5-phospho-beta-D-ribosyl)imidazole + ADP + phosphate + H(+). Its pathway is purine metabolism; IMP biosynthesis via de novo pathway; 5-amino-1-(5-phospho-D-ribosyl)imidazole from N(2)-formyl-N(1)-(5-phospho-D-ribosyl)glycinamide: step 2/2. In Bifidobacterium animalis subsp. lactis (strain AD011), this protein is Phosphoribosylformylglycinamidine cyclo-ligase.